The chain runs to 466 residues: GTPase Der (466 aa).

EngA-type G domains lie at 3–166 and 177–350; these read PVIA…PEIP and IKIA…QSAT. Residues 9–16, 56–60, 118–121, 183–190, 230–234, and 295–298 contribute to the GTP site; these read GRPNVGKS, DTGGI, NKID, DTAGV, and NKWD. The KH-like domain occupies 351–435; the sequence is DRFSTNYLTR…PIRIEFRTTD (85 aa). Residues 442-466 are disordered; that stretch reads KKSMTRQQFIQKRRKEERDRNNPRR. The segment covering 455 to 466 has biased composition (basic and acidic residues); that stretch reads RKEERDRNNPRR.

The protein belongs to the TRAFAC class TrmE-Era-EngA-EngB-Septin-like GTPase superfamily. EngA (Der) GTPase family. Associates with the 50S ribosomal subunit.

Functionally, GTPase that plays an essential role in the late steps of ribosome biogenesis. The polypeptide is GTPase Der (Cellvibrio japonicus (strain Ueda107) (Pseudomonas fluorescens subsp. cellulosa)).